The following is an 837-amino-acid chain: Tuftelin-interacting protein 11 (837 aa).

2 stretches are compositionally biased toward basic and acidic residues: residues 1–13 (MSLS…GEGR) and 53–64 (VWAERDSDDERP). Disordered stretches follow at residues 1-21 (MSLS…DDER), 53-72 (VWAE…KRAR), and 85-133 (LKKG…KGFA). The required for interaction with DHX15 stretch occupies residues 1–50 (MSLSHLYRDGEGRIDDDDDERENFEITDWDLQNEFNPNRQRHWQTKEEAT). Residues S2, S59, and S98 each carry the phosphoserine modification. The span at 91–102 (EEAELEDSDDEE) shows a compositional bias: acidic residues. Residues 103 to 116 (RPVKQDDFPKDFGP) show a composition bias toward basic and acidic residues. S144 carries the phosphoserine modification. Positions 149–195 (TKGIGQKLLQKMGYVPGRGLGKNAQGIINPIEAKQRKGKGAVGAYGS) constitute a G-patch domain. The segment at 179–236 (IEAKQRKGKGAVGAYGSERTTQSMQDFPVVDSEEEAEEEFQKELSQWRKDPSGSKKKP) is disordered. S210 bears the Phosphoserine mark. The segment covering 217 to 231 (EFQKELSQWRKDPSG) has biased composition (basic and acidic residues). Positions 700–705 (VKDKFN) match the Nuclear localization signal motif. The interval 710–734 (IMNRAVSSNVGAYMQPGARENIAYL) is required for nuclear speckle localization.

The protein belongs to the TFP11/STIP family. In terms of assembly, identified in the spliceosome C complex. Found in the Intron Large (IL) complex, a post-mRNA release spliceosomal complex containing the excised intron, U2, U5 and U6 snRNPs, and splicing factors. Interacts with TUFT1. Interacts with DHX15; indicative for a recruitment of DHX15 to the IL complex. Interacts with GCFC2.

Its subcellular location is the cytoplasm. It is found in the nucleus. In terms of biological role, involved in pre-mRNA splicing, specifically in spliceosome disassembly during late-stage splicing events. Intron turnover seems to proceed through reactions in two lariat-intron associated complexes termed Intron Large (IL) and Intron Small (IS). In cooperation with DHX15 seems to mediate the transition of the U2, U5 and U6 snRNP-containing IL complex to the snRNP-free IS complex leading to efficient debranching and turnover of excised introns. May play a role in the differentiation of ameloblasts and odontoblasts or in the forming of the enamel extracellular matrix. The protein is Tuftelin-interacting protein 11 (TFIP11) of Macaca mulatta (Rhesus macaque).